Reading from the N-terminus, the 37-residue chain is Large ribosomal subunit protein bL36 (37 aa).

This sequence belongs to the bacterial ribosomal protein bL36 family.

The chain is Large ribosomal subunit protein bL36 from Deinococcus deserti (strain DSM 17065 / CIP 109153 / LMG 22923 / VCD115).